Reading from the N-terminus, the 860-residue chain is Leucine--tRNA ligase (860 aa).

The 'HIGH' region signature appears at 42 to 52 (PYPSGRLHMGH). Positions 619 to 623 (KMSKS) match the 'KMSKS' region motif. Lys622 provides a ligand contact to ATP.

It belongs to the class-I aminoacyl-tRNA synthetase family.

Its subcellular location is the cytoplasm. The enzyme catalyses tRNA(Leu) + L-leucine + ATP = L-leucyl-tRNA(Leu) + AMP + diphosphate. This Sodalis glossinidius (strain morsitans) protein is Leucine--tRNA ligase.